The chain runs to 380 residues: Cytochrome b (380 aa).

Helical transmembrane passes span 33 to 53, 77 to 98, 113 to 133, and 178 to 198; these read FGSLLGICLITQIVTGLFLAM, WLIRSTHANGASLFFICIYLHV, WNIGVILLMLVMITAFVGYVL, and FFAFHFLLPFVISGASIIHLL. The heme b site is built by histidine 83 and histidine 97. 2 residues coordinate heme b: histidine 182 and histidine 196. Histidine 201 provides a ligand contact to a ubiquinone. 4 consecutive transmembrane segments (helical) span residues 226 to 246, 288 to 308, 320 to 340, and 347 to 367; these read YKDMLGFLITLTTLAFLTLFT, LGGVLALVSSILVLLLVPILH, ITQMLFWALVADMLILTWIGG, and FMTIGQIASITYFSLFLILIP.

This sequence belongs to the cytochrome b family. As to quaternary structure, the cytochrome bc1 complex contains 3 respiratory subunits (MT-CYB, CYC1 and UQCRFS1), 2 core proteins (UQCRC1 and UQCRC2) and probably 6 low-molecular weight proteins. Heme b serves as cofactor.

The protein resides in the mitochondrion inner membrane. Component of the ubiquinol-cytochrome c reductase complex (complex III or cytochrome b-c1 complex) that is part of the mitochondrial respiratory chain. The b-c1 complex mediates electron transfer from ubiquinol to cytochrome c. Contributes to the generation of a proton gradient across the mitochondrial membrane that is then used for ATP synthesis. The sequence is that of Cytochrome b (mt-cyb) from Latimeria chalumnae (Coelacanth).